A 1265-amino-acid chain; its full sequence is Stromal processing peptidase, chloroplastic (1265 aa).

A chloroplast-targeting transit peptide spans 1-143 (MASSSSSIFT…SLRKHSQIVN (143 aa)). Zn(2+) is bound at residue H240. The active-site Proton acceptor is the E243. H244 is a Zn(2+) binding site. Residue E314 is part of the active site. E321 lines the Zn(2+) pocket.

The protein belongs to the peptidase M16 family. Zn(2+) is required as a cofactor.

The protein resides in the plastid. It is found in the chloroplast stroma. In terms of biological role, cleaves presequences (transit peptides) from chloroplastic protein precursors. Initially recognizes a precursor by binding to the C-terminus of its transit peptide and then removes the transit peptide in a single endoproteolytic step. In a next step, pursues the cleavage of transit peptide to a subfragment form. The protein is Stromal processing peptidase, chloroplastic of Arabidopsis thaliana (Mouse-ear cress).